Consider the following 284-residue polypeptide: Cell division protein FtsQ (284 aa).

Residues 1 to 10 (MAFGKSKNRR) show a composition bias toward basic residues. The disordered stretch occupies residues 1 to 23 (MAFGKSKNRRRQDAAQQKEAVRG). Residues 1–34 (MAFGKSKNRRRQDAAQQKEAVRGAVRSQGPRALK) lie on the Cytoplasmic side of the membrane. Residues 35–52 (VLGLTLGTGLLVWGGAAL) traverse the membrane as a helical segment. The Periplasmic segment spans residues 53–284 (REWTLTSPRF…ASERSGASMR (232 aa)). A POTRA domain is found at 62–130 (FELEAVSFSG…NRVSVEVTEH (69 aa)).

Belongs to the FtsQ/DivIB family. FtsQ subfamily.

The protein resides in the cell inner membrane. Essential cell division protein. The protein is Cell division protein FtsQ of Myxococcus fulvus (strain ATCC BAA-855 / HW-1).